Here is a 41-residue protein sequence, read N- to C-terminus: MKNTVKLEQFVALKEKDLQKIKGGEMRLSKFFRDFILQRKK.

Residues Met-1–Gly-24 constitute a propeptide that is removed on maturation.

The protein belongs to the ComC family.

The protein localises to the secreted. Functionally, acts as a pheromone, induces cells to develop competence for genetic transformation. In Streptococcus pneumoniae, this protein is Competence-stimulating peptide type 1 (comC1).